The primary structure comprises 206 residues: MPNSNPVAAWKALKDGNARFVAGQPLHPSQGIERRASLTQAQRPTAVVFGCGDSRVAAEILFDQGLGDMFVVRTAGHVIDNAVLGSIEYAVTVLKVPLIVVLGHDSCGAVKATLSALDEGEVPSGFVRDIVERVTPSILLGRKAGLSRVDEFEAQHVNETVAQLQMRSTAIAQGLAAGTQAIVGTTYHLADGRVELRSHLGDIGEV.

Residue Lys11 forms an Isoglutamyl lysine isopeptide (Lys-Gln) (interchain with Q-Cter in protein Pup) linkage. Cys51, Asp53, His104, and Cys107 together coordinate Zn(2+).

Belongs to the beta-class carbonic anhydrase family. As to quaternary structure, homotetramer. Zn(2+) is required as a cofactor.

It catalyses the reaction hydrogencarbonate + H(+) = CO2 + H2O. Its function is as follows. Catalyzes the reversible hydration of carbon dioxide to form bicarbonate. This chain is Carbonic anhydrase (cynT), found in Mycolicibacterium smegmatis (strain ATCC 700084 / mc(2)155) (Mycobacterium smegmatis).